Here is a 166-residue protein sequence, read N- to C-terminus: Urease accessory protein UreE (166 aa).

It belongs to the UreE family.

It is found in the cytoplasm. In terms of biological role, involved in urease metallocenter assembly. Binds nickel. Probably functions as a nickel donor during metallocenter assembly. The polypeptide is Urease accessory protein UreE (Pseudomonas fluorescens (strain Pf0-1)).